We begin with the raw amino-acid sequence, 315 residues long: Neuroguidin (315 aa).

A2 carries the N-acetylalanine modification. Residues 7 to 41 (LESDVSSSITLLKNLQEQVMAVTAQIQALTTKVRA) are a coiled coil. The tract at residues 41 to 174 (AGTYSTEKGL…KGSAKKYVPP (134 aa)) is necessary for interaction with EIF4E. S121, S142, and S143 each carry phosphoserine. The segment at 123–190 (SENDPLRFKP…YDETEAEREQ (68 aa)) is disordered. Residues 144 to 155 (EDEEESEAEEGQ) are compositionally biased toward acidic residues. The segment covering 180 to 190 (HYDETEAEREQ) has biased composition (basic and acidic residues). The stretch at 181–203 (YDETEAEREQKRLEKAKRRALSS) forms a coiled coil. A phosphoserine mark is found at S204 and S214. 2 stretches are compositionally biased toward basic and acidic residues: residues 212–225 (QYSD…DARH) and 232–241 (SQEDQHRVNY). Disordered regions lie at residues 212–243 (QYSD…NYEE) and 284–315 (GTAH…RRRW). Residues 295 to 315 (VKKRKKLPKKGRKKKGFRRRW) are compositionally biased toward basic residues.

Belongs to the SAS10 family. Interacts with CPEB1 and EIF4E. As to expression, expressed in testis, ovary, spleen, kidney, hippocampus and cerebellum (at protein level). Expressed in testis, ovary, spleen, kidney, brain.

Its subcellular location is the nucleus. The protein localises to the nucleolus. The protein resides in the chromosome. It is found in the centromere. It localises to the cytoplasm. Its subcellular location is the cell projection. The protein localises to the axon. The protein resides in the dendrite. It is found in the filopodium. Part of the small subunit (SSU) processome, first precursor of the small eukaryotic ribosomal subunit. During the assembly of the SSU processome in the nucleolus, many ribosome biogenesis factors, an RNA chaperone and ribosomal proteins associate with the nascent pre-rRNA and work in concert to generate RNA folding, modifications, rearrangements and cleavage as well as targeted degradation of pre-ribosomal RNA by the RNA exosome. Its dissociation from the complex determines the transition from state pre-A1 to state pre-A1*. Inhibits mRNA translation in a cytoplasmic polyadenylation element (CPE)-dependent manner. The sequence is that of Neuroguidin (Ngdn) from Mus musculus (Mouse).